The sequence spans 489 residues: Rhamnulokinase (489 aa).

An ATP-binding site is contributed by 13–17 (ASSGR). Cys68 and Cys222 are disulfide-bonded. Substrate-binding positions include Gly83 and 236 to 238 (HDT). Asp237 (proton acceptor) is an active-site residue. Thr259 is an ATP binding site. Asn296 is a substrate binding site. Gln304 contacts ATP. Residues Cys353 and Cys370 are joined by a disulfide bond. Gly402 lines the ATP pocket. Cysteines 413 and 417 form a disulfide.

Belongs to the rhamnulokinase family. Mg(2+) is required as a cofactor.

It carries out the reaction L-rhamnulose + ATP = L-rhamnulose 1-phosphate + ADP + H(+). It participates in carbohydrate degradation; L-rhamnose degradation; glycerone phosphate from L-rhamnose: step 2/3. In terms of biological role, involved in the catabolism of L-rhamnose (6-deoxy-L-mannose). Catalyzes the transfer of the gamma-phosphate group from ATP to the 1-hydroxyl group of L-rhamnulose to yield L-rhamnulose 1-phosphate. In Enterobacter sp. (strain 638), this protein is Rhamnulokinase.